Reading from the N-terminus, the 142-residue chain is Large ribosomal subunit protein uL13 (142 aa).

The protein belongs to the universal ribosomal protein uL13 family. In terms of assembly, part of the 50S ribosomal subunit.

Its function is as follows. This protein is one of the early assembly proteins of the 50S ribosomal subunit, although it is not seen to bind rRNA by itself. It is important during the early stages of 50S assembly. This is Large ribosomal subunit protein uL13 from Polaromonas sp. (strain JS666 / ATCC BAA-500).